The primary structure comprises 109 residues: ATP-dependent Clp protease adapter protein ClpS (109 aa).

The tract at residues 1 to 23 is disordered; sequence MTERKHDDTGVEEGTGLATKTRP.

Belongs to the ClpS family. Binds to the N-terminal domain of the chaperone ClpA.

Its function is as follows. Involved in the modulation of the specificity of the ClpAP-mediated ATP-dependent protein degradation. The polypeptide is ATP-dependent Clp protease adapter protein ClpS (Maricaulis maris (strain MCS10) (Caulobacter maris)).